The following is a 662-amino-acid chain: Histidine decarboxylase (662 aa).

Substrate is bound by residues Tyr88 and His201. Lys312 is subject to N6-(pyridoxal phosphate)lysine. The interval 489-518 (QPSPRAKNVIPPPPGTRGLSLESVSEGGDD) is disordered.

This sequence belongs to the group II decarboxylase family. In terms of assembly, homodimer. Requires pyridoxal 5'-phosphate as cofactor.

The enzyme catalyses L-histidine + H(+) = histamine + CO2. It functions in the pathway amine and polyamine biosynthesis; histamine biosynthesis; histamine from L-histidine: step 1/1. In terms of biological role, catalyzes the biosynthesis of histamine from histidine. This chain is Histidine decarboxylase (Hdc), found in Mus musculus (Mouse).